The primary structure comprises 156 residues: Ribosomal RNA large subunit methyltransferase H (156 aa).

S-adenosyl-L-methionine is bound by residues leucine 73, glycine 104, and 123–128; that span reads LSSLTL.

This sequence belongs to the RNA methyltransferase RlmH family. Homodimer.

It localises to the cytoplasm. The enzyme catalyses pseudouridine(1915) in 23S rRNA + S-adenosyl-L-methionine = N(3)-methylpseudouridine(1915) in 23S rRNA + S-adenosyl-L-homocysteine + H(+). In terms of biological role, specifically methylates the pseudouridine at position 1915 (m3Psi1915) in 23S rRNA. The polypeptide is Ribosomal RNA large subunit methyltransferase H (Bordetella avium (strain 197N)).